Reading from the N-terminus, the 408-residue chain is Serine/threonine transporter SstT (408 aa).

The next 9 helical transmembrane spans lie at 14–34 (GNLI…GIFS), 43–63 (IFGA…VFIL), 83–103 (IIFL…SISF), 143–163 (ALSS…GFAL), 181–201 (VLKI…GLVA), 219–239 (LIIL…LIVF), 247–269 (YPLI…SSAA), 290–310 (ISIP…IAIL), and 332–352 (VLAA…LLLI).

This sequence belongs to the dicarboxylate/amino acid:cation symporter (DAACS) (TC 2.A.23) family.

It is found in the cell inner membrane. It catalyses the reaction L-serine(in) + Na(+)(in) = L-serine(out) + Na(+)(out). It carries out the reaction L-threonine(in) + Na(+)(in) = L-threonine(out) + Na(+)(out). In terms of biological role, involved in the import of serine and threonine into the cell, with the concomitant import of sodium (symport system). This chain is Serine/threonine transporter SstT, found in Campylobacter lari (strain RM2100 / D67 / ATCC BAA-1060).